A 390-amino-acid chain; its full sequence is MYMIESKGGAIACMLLALLFLGTWPAIMTLTERRGRLPQHTYLDYTLTNLLAAVIIALTLGEIGPSRPNFFTQLSQDNWQSVMFAMAGGIVLSLGNLATQYAWAYVGLSVTEVITASITVVIGTTLNYFLDDRINRAEVLFPGVACFLIAVCFGSAVHKSNAADNKTKLQNFKSLETTSSFEMETISASNGLTKGKAKEGTAAFLIELEKQRAIKVFGKSTIIGLVITFFAGICFSLFSPAFNLATNDQWHTLKHGVPKLNVYTAFFYFSISAFVVALILNIRFLYWPILGLPRSSFKAYLNDWNGRGWSFLAGFLCGFGNGLQFMGGQAAGYAAADAVQALPLVSTFWGILLFGEYRRSSRKTYTLLISMLLMFIVAVAVLMASSGHRK.

Residues 1–9 lie on the Extracellular side of the membrane; it reads MYMIESKGG. Residues 10 to 30 form a helical membrane-spanning segment; it reads AIACMLLALLFLGTWPAIMTL. Residues 31 to 44 lie on the Cytoplasmic side of the membrane; it reads TERRGRLPQHTYLD. A helical membrane pass occupies residues 45–65; sequence YTLTNLLAAVIIALTLGEIGP. Topologically, residues 66-78 are extracellular; that stretch reads SRPNFFTQLSQDN. The chain crosses the membrane as a helical span at residues 79-99; that stretch reads WQSVMFAMAGGIVLSLGNLAT. Residues 100-101 lie on the Cytoplasmic side of the membrane; that stretch reads QY. The helical transmembrane segment at 102–122 threads the bilayer; the sequence is AWAYVGLSVTEVITASITVVI. Residues 123-136 are Extracellular-facing; it reads GTTLNYFLDDRINR. The chain crosses the membrane as a helical span at residues 137–157; that stretch reads AEVLFPGVACFLIAVCFGSAV. Residues 158–221 are Cytoplasmic-facing; the sequence is HKSNAADNKT…RAIKVFGKST (64 aa). Residue 213–220 participates in ATP binding; that stretch reads AIKVFGKS. Residues 222-242 form a helical membrane-spanning segment; sequence IIGLVITFFAGICFSLFSPAF. Residues 243–261 lie on the Extracellular side of the membrane; the sequence is NLATNDQWHTLKHGVPKLN. Residues 262 to 282 form a helical membrane-spanning segment; it reads VYTAFFYFSISAFVVALILNI. Residues 283 to 307 are Cytoplasmic-facing; the sequence is RFLYWPILGLPRSSFKAYLNDWNGR. A helical membrane pass occupies residues 308–328; that stretch reads GWSFLAGFLCGFGNGLQFMGG. Over 329-333 the chain is Extracellular; that stretch reads QAAGY. A helical transmembrane segment spans residues 334 to 354; sequence AAADAVQALPLVSTFWGILLF. The Cytoplasmic portion of the chain corresponds to 355 to 363; the sequence is GEYRRSSRK. A helical membrane pass occupies residues 364–384; sequence TYTLLISMLLMFIVAVAVLMA. Residues 385–390 are Extracellular-facing; it reads SSGHRK.

This sequence belongs to the plant ureide permease (TC 2.A.7.19) family. Expressed in leaves, flowers, roots and stems.

It is found in the membrane. Functionally, proton-coupled transporter that transports a wide spectrum of oxo derivatives of heterocyclic nitrogen compounds, including allantoin, uric acid and xanthine, but not adenine. Mediates high affinity transport of uracil and 5-fluorouracil (a toxic uracil analog). Mediates transport of free pyrimidines and may function during early seedling development in salvage pathways, by the utilization of pyrimidines from seed storage tissue. The polypeptide is Ureide permease 1 (Arabidopsis thaliana (Mouse-ear cress)).